Consider the following 188-residue polypeptide: dCTP deaminase (188 aa).

109 to 114 is a dCTP binding site; sequence KSTYAR. The active-site Proton donor/acceptor is the E135. Q154, Y168, and Q178 together coordinate dCTP.

Belongs to the dCTP deaminase family. Homotrimer.

The catalysed reaction is dCTP + H2O + H(+) = dUTP + NH4(+). Its pathway is pyrimidine metabolism; dUMP biosynthesis; dUMP from dCTP (dUTP route): step 1/2. In terms of biological role, catalyzes the deamination of dCTP to dUTP. This is dCTP deaminase from Helicobacter pylori (strain G27).